The chain runs to 400 residues: MIIKPRVRGFICVTTHPVGCEANVKEQIDYVTSHGPIANGPKKVLVIGASTGYGLAARISAAFGSDADTLGVFFERAGSETKPGTAGWYNSAAFEKFATEKGRYARSINGDAFSDHVKQVTIDTIKQDLGKVDLVVYSLAAPRRTHPKTGETISSTLKPIGKTVTFRGLDTDKEVLRDVTLEPATQEEIDGTVAVMGGEDWQMWIDALDEAGVLADGAKTTAFTYLGEQITHDIYWNGSIGEAKKDLDKKVLSIRDQLAAHGGDARVSVLKAVVTQASSAIPMMPLYLSLLFKTMKETGTHEGCIEQVYGLFKDSLYGATPHVDEEGRLRADYKELDPQVQAKVVAQWDHVTNDNLYELTDFTGYKTEFLRLFGFEIAGVDYDADVNPDVKIPGIIDTTV.

NAD(+) contacts are provided by residues 48–53, 74–75, 111–112, and 139–140; these read GASTGY, FE, DA, and LA. Residue tyrosine 225 participates in substrate binding. The active-site Proton donor is tyrosine 235. Residues lysine 244 and 273–275 contribute to the NAD(+) site; that span reads VVT.

It belongs to the TER reductase family. In terms of assembly, monomer.

The enzyme catalyses a 2,3-saturated acyl-[ACP] + NAD(+) = a (2E)-enoyl-[ACP] + NADH + H(+). The protein operates within lipid metabolism; fatty acid biosynthesis. Its function is as follows. Involved in the final reduction of the elongation cycle of fatty acid synthesis (FAS II). Catalyzes the reduction of a carbon-carbon double bond in an enoyl moiety that is covalently linked to an acyl carrier protein (ACP). The chain is Enoyl-[acyl-carrier-protein] reductase [NADH] from Burkholderia lata (strain ATCC 17760 / DSM 23089 / LMG 22485 / NCIMB 9086 / R18194 / 383).